A 1082-amino-acid polypeptide reads, in one-letter code: uncharacterized protein (1082 aa).

Residues threonine 50–phenylalanine 319 form the PNPLA domain. The GXSXG signature appears at glycine 120–glycine 124. Catalysis depends on serine 122, which acts as the Nucleophile. Residue aspartate 306 is the Proton acceptor of the active site. Positions aspartate 306–glycine 308 match the DGA/G motif. 4 helical membrane passes run isoleucine 959–isoleucine 979, valine 982–leucine 1002, leucine 1012–valine 1032, and tryptophan 1057–alanine 1077.

It localises to the cell membrane. This is an uncharacterized protein from Mycobacterium tuberculosis (strain ATCC 25618 / H37Rv).